A 56-amino-acid chain; its full sequence is MAHENVWYSHPRKFGKGSRQCRISGSHSGLIRKYGLNIDRQSFREKANDIGFYKYR.

It belongs to the universal ribosomal protein uS14 family.

The polypeptide is Small ribosomal subunit protein uS14 (RPS29) (Kluyveromyces lactis (strain ATCC 8585 / CBS 2359 / DSM 70799 / NBRC 1267 / NRRL Y-1140 / WM37) (Yeast)).